The following is a 557-amino-acid chain: Large cysteine-rich periplasmic protein omcB (557 aa).

The N-terminal stretch at 1 to 22 (MSKLIRRVVTVLALTSMASSFA) is a signal peptide. Residues 23–40 (SGKIEAAAAESLATRFIA) constitute a propeptide that is removed on maturation.

In terms of assembly, part of a disulfide cross-linked outer membrane complex (COMC) composed of the major outer membrane porin (MOMP), the small cysteine-rich protein (omcA) and the large cysteine-rich periplasmic protein (omcB).

The protein resides in the periplasm. In terms of biological role, in elementary bodies (EBs, the infectious stage, which is able to survive outside the host cell) provides the structural integrity of the outer envelope through disulfide cross-links with the small cysteine-rich protein and the major outer membrane porin. It has been described in publications as the Sarkosyl-insoluble COMC (Chlamydia outer membrane complex), and serves as the functional equivalent of peptidoglycan. The polypeptide is Large cysteine-rich periplasmic protein omcB (omcB) (Chlamydophila psittaci (strain ATCC VR-125 / 6BC) (Chlamydia psittaci)).